The primary structure comprises 105 residues: Flower-specific defensin (105 aa).

The signal sequence occupies residues 1–25; that stretch reads MARSLCFMAFAILAMMLFVAYEVQA. Intrachain disulfides connect cysteine 28–cysteine 72, cysteine 39–cysteine 59, cysteine 45–cysteine 66, and cysteine 49–cysteine 68. Positions 73-105 are cleaved as a propeptide — removed in mature form; it reads VFDEKMTKTGAEILAEEAKTLAAALLEEEIMDN.

The protein belongs to the DEFL family. As to expression, most abundant in the epidermal cell layers of the petals and sepals, within the connective cells of the anthers, and the cortical cells of the style. Not detected in the tapetum, pollen mother cells, the transmitting tissue, the vascular bundles of the anther and style or in leaves. Expressed also in ovaries, but barley detectable in roots.

It is found in the secreted. The protein localises to the vacuole. Functionally, plant defense peptide with antifungal activity against F.oxysporum and B.cinerea. Retards the growth of the Lepidopteran insect pests H.armigera and H.punctigera. The sequence is that of Flower-specific defensin (D1) from Nicotiana alata (Winged tobacco).